We begin with the raw amino-acid sequence, 601 residues long: Protein nubbin (601 aa).

Residues 1–25 (MVMSELRWHTASPEDNKNSLKRDLL) are compositionally biased toward basic and acidic residues. 5 disordered regions span residues 1–32 (MVMS…PTSA), 49–94 (SRSP…AKRQ), 121–158 (KQEE…ATAS), 351–425 (PASS…ETTD), and 581–601 (INPS…YMMH). The segment covering 49-68 (SRSPSPLQSNASDCDDNNSS) has biased composition (low complexity). A compositionally biased stretch (polar residues) spans 135 to 157 (NLTSDNSRHSTQSPSNSVKSATA). A compositionally biased stretch (low complexity) spans 384–415 (TPSTPTSGTQMSQGTTTPQPKTVASAAAARAA). The POU-specific domain occupies 421–495 (EETTDLEELE…LLQKWLDDAD (75 aa)). Positions 523–582 (RRKKRTSIETTIRGALEKAFLANQKPTSEEITQLADRLSMEKEVVRVWFCNRRQKEKRIN) form a DNA-binding region, homeobox. Positions 591–601 (ADDDESSYMMH) are enriched in acidic residues.

It belongs to the POU transcription factor family. Class-2 subfamily. In terms of tissue distribution, initial expression in cellular blastoderm stage, then in ectodermal stripes during germband extension. Broad expression in the neuroectoderm followed by limitation to discrete subsets of CNS cells, and expression in specific PNS neurons and support cells.

The protein resides in the nucleus. In terms of biological role, DNA-binding regulatory protein implicated in early development. Involved in neuronal cell fate decision. Repressed directly or indirectly by the BX-C homeotic proteins. This chain is Protein nubbin (nub), found in Drosophila melanogaster (Fruit fly).